The chain runs to 637 residues: DNA damage-binding protein CMR1 (637 aa).

Disordered stretches follow at residues 1 to 91 (MIES…EEEA) and 144 to 168 (LVDT…TERR). 2 stretches are compositionally biased toward basic and acidic residues: residues 8–23 (EQER…RLMK) and 74–91 (AGHE…EEEA). WD repeat units follow at residues 185-226 (VTPK…FASN), 255-295 (HARS…SEEI), 297-321 (AGEE…VYMD), 361-401 (VCEK…SVVK), and 431-470 (KARQ…LFSE). 2 disordered regions span residues 482 to 508 (SNKP…LSWL) and 525 to 549 (KQEQ…PTRI). WD repeat units lie at residues 556-598 (GKWL…LRSL) and 602-637 (NLVT…SPDP).

This sequence belongs to the WD repeat DDB2/WDR76 family.

DNA-binding protein that binds to both single- and double-stranded DNA. Binds preferentially to UV-damaged DNA. May be involved in DNA-metabolic processes. The polypeptide is DNA damage-binding protein CMR1 (Mycosarcoma maydis (Corn smut fungus)).